Here is a 238-residue protein sequence, read N- to C-terminus: UPF0173 metal-dependent hydrolase Helmi_16730 (238 aa).

This sequence belongs to the UPF0173 family.

This Heliobacterium modesticaldum (strain ATCC 51547 / Ice1) protein is UPF0173 metal-dependent hydrolase Helmi_16730.